The following is a 4518-amino-acid chain: Dynein axonemal heavy chain 11 (4518 aa).

Residues M1–Q1857 are stem. AAA regions lie at residues Y1858–V2079, Q2139–K2368, T2474–G2721, and N2819–H3068. Residues G1896–T1903, G2177–S2184, G2512–T2519, and G2857–Q2864 each bind ATP. The interval K3074 to Q3405 is stalk. Residues L3322–K3391 adopt a coiled-coil conformation. AAA regions lie at residues L3461–R3688 and L3898–N4124.

It belongs to the dynein heavy chain family. Consists of at least two heavy chains and a number of intermediate and light chains. Interacts with CFAP45.

It is found in the cytoplasm. It localises to the cytoskeleton. The protein localises to the cilium axoneme. In terms of biological role, force generating protein of respiratory cilia. Produces force towards the minus ends of microtubules. Dynein has ATPase activity; the force-producing power stroke is thought to occur on release of ADP. This chain is Dynein axonemal heavy chain 11 (DNAH11), found in Sus scrofa (Pig).